The chain runs to 488 residues: Putative serine carboxypeptidase-like 30 (488 aa).

An N-terminal signal peptide occupies residues 1–28 (MDNHTKSFSSLLISLWFTALLILVEMVS). Cystine bridges form between Cys99/Cys368, Cys262/Cys275, and Cys299/Cys336. N-linked (GlcNAc...) asparagine glycosylation occurs at Asn150. The active site involves Ser192. Asn263 is a glycosylation site (N-linked (GlcNAc...) asparagine). Asn364 and Asn375 each carry an N-linked (GlcNAc...) asparagine glycan. Catalysis depends on residues Asp405 and His457.

The protein belongs to the peptidase S10 family. As to expression, expression not detected.

It localises to the secreted. Probable carboxypeptidase. The chain is Putative serine carboxypeptidase-like 30 (SCPL30) from Arabidopsis thaliana (Mouse-ear cress).